Consider the following 274-residue polypeptide: Formamidopyrimidine-DNA glycosylase (274 aa).

P2 functions as the Schiff-base intermediate with DNA in the catalytic mechanism. Catalysis depends on E3, which acts as the Proton donor. K58 serves as the catalytic Proton donor; for beta-elimination activity. H91, R110, and K152 together coordinate DNA. The FPG-type zinc finger occupies 237–271; it reads KVYGRKNLPCLVCENKIETVVIAGRHSAFCPHCQP. R261 serves as the catalytic Proton donor; for delta-elimination activity.

Belongs to the FPG family. Monomer. Requires Zn(2+) as cofactor.

It catalyses the reaction Hydrolysis of DNA containing ring-opened 7-methylguanine residues, releasing 2,6-diamino-4-hydroxy-5-(N-methyl)formamidopyrimidine.. It carries out the reaction 2'-deoxyribonucleotide-(2'-deoxyribose 5'-phosphate)-2'-deoxyribonucleotide-DNA = a 3'-end 2'-deoxyribonucleotide-(2,3-dehydro-2,3-deoxyribose 5'-phosphate)-DNA + a 5'-end 5'-phospho-2'-deoxyribonucleoside-DNA + H(+). Involved in base excision repair of DNA damaged by oxidation or by mutagenic agents. Acts as a DNA glycosylase that recognizes and removes damaged bases. Has a preference for oxidized purines, such as 7,8-dihydro-8-oxoguanine (8-oxoG). Has AP (apurinic/apyrimidinic) lyase activity and introduces nicks in the DNA strand. Cleaves the DNA backbone by beta-delta elimination to generate a single-strand break at the site of the removed base with both 3'- and 5'-phosphates. The chain is Formamidopyrimidine-DNA glycosylase from Legionella pneumophila subsp. pneumophila (strain Philadelphia 1 / ATCC 33152 / DSM 7513).